The chain runs to 34 residues: Photosystem II reaction center protein M (34 aa).

The helical transmembrane segment at 5 to 25 (ILGLIATTLFILIPTSFLLIL) threads the bilayer.

The protein belongs to the PsbM family. As to quaternary structure, PSII is composed of 1 copy each of membrane proteins PsbA, PsbB, PsbC, PsbD, PsbE, PsbF, PsbH, PsbI, PsbJ, PsbK, PsbL, PsbM, PsbT, PsbX, PsbY, PsbZ, Psb30/Ycf12, at least 3 peripheral proteins of the oxygen-evolving complex and a large number of cofactors. It forms dimeric complexes.

The protein localises to the plastid. Its subcellular location is the chloroplast thylakoid membrane. One of the components of the core complex of photosystem II (PSII). PSII is a light-driven water:plastoquinone oxidoreductase that uses light energy to abstract electrons from H(2)O, generating O(2) and a proton gradient subsequently used for ATP formation. It consists of a core antenna complex that captures photons, and an electron transfer chain that converts photonic excitation into a charge separation. This subunit is found at the monomer-monomer interface. The protein is Photosystem II reaction center protein M of Pleurastrum terricola (Filamentous green alga).